We begin with the raw amino-acid sequence, 241 residues long: Dihydropteridine reductase (241 aa).

11–35 (LVYGGRGALGSRCVQAFRARNWWVA) contacts NADP(+). Residues Lys-70, Lys-76, Lys-93, and Lys-99 each carry the N6-succinyllysine modification. Tyr-147 acts as the Proton acceptor in catalysis. A Phosphoserine modification is found at Ser-170.

Belongs to the short-chain dehydrogenases/reductases (SDR) family. As to quaternary structure, homodimer.

It carries out the reaction 5,6,7,8-tetrahydropteridine + NAD(+) = 6,7-dihydropteridine + NADH + H(+). The catalysed reaction is 5,6,7,8-tetrahydropteridine + NADP(+) = 6,7-dihydropteridine + NADPH + H(+). Catalyzes the conversion of quinonoid dihydrobiopterin into tetrahydrobiopterin. The protein is Dihydropteridine reductase (Qdpr) of Rattus norvegicus (Rat).